The chain runs to 602 residues: MDSRVSGTTSNGETKPVCPGLEKAAEDGALQREQWSNKMEFLLSVAGEIIGLGNVWRFPYLCYKNGGGAFFIPYLIFLFTCGIPVFLLETALGQYTSQGGITAWRKICPIFEGIGYASQMIVTLLNIYYIIVLAWALFYLFSSFTIDLPWGSCRHDWNTERCVEFQRTNGSLNATAENATSPVIEFWERRVLKISEGIQHLGALRWELALCLLLAWVVCYFCIWKGVKSTGKVVYFTATFPYLMLVVLLIRGVTLPGAAQGIQFYLYPNLTRLWDPQVWMDAGTQIFFSFAICLGCLTALGSYNKYHNNCYRDSIALCFLNSGTSFVAGFAIFSILGFMSQEQGVPISEVAESGPGLAFIAYPRAVVMLPFSPLWACCFFFMVVLLGLDSQFVCVESLVTALVDMYPRVFRKKNRREVLILGVSVTSFLVGLVMLTEGGMYVFQLFDYYAASGMCLLFVAIFESFCVAWAYGAGRFYDNIEDMIGYRPWPLIKYCWLFLTPAVCTATFLFSLIKYTPLTYNKKYKYPWWGDALGWLLALSSMVCIPAWSCYKLSTLKGSFRERVRQLLCPAKDLPQGHREGPSAPATPRTSLLILTELEPHH.

Over 1 to 40 the chain is Cytoplasmic; that stretch reads MDSRVSGTTSNGETKPVCPGLEKAAEDGALQREQWSNKME. The next 3 helical transmembrane spans lie at 41–61, 68–88, and 121–141; these read FLLS…FPYL, GAFF…VFLL, and IVTL…FYLF. Residues 142–206 are Extracellular-facing; the sequence is SSFTIDLPWG…GIQHLGALRW (65 aa). A disulfide bridge connects residues Cys-153 and Cys-162. 2 N-linked (GlcNAc...) asparagine glycosylation sites follow: Asn-169 and Asn-173. A run of 2 helical transmembrane segments spans residues 207-227 and 233-253; these read ELAL…WKGV and VVYF…IRGV. The N-linked (GlcNAc...) asparagine glycan is linked to Asn-269. The next 7 membrane-spanning stretches (helical) occupy residues 282–302, 319–339, 366–386, 418–438, 453–473, 490–510, and 528–548; these read AGTQ…ALGS, FLNS…LGFM, VVML…VVLL, VLIL…LTEG, GMCL…AYGA, PLIK…TFLF, and WWGD…IPAW. Residues 549-602 lie on the Cytoplasmic side of the membrane; the sequence is SCYKLSTLKGSFRERVRQLLCPAKDLPQGHREGPSAPATPRTSLLILTELEPHH. Thr-587 is subject to Phosphothreonine. Ser-591 is subject to Phosphoserine.

The protein belongs to the sodium:neurotransmitter symporter (SNF) (TC 2.A.22) family. SLC6A13 subfamily.

The protein localises to the cell membrane. It is found in the basolateral cell membrane. The enzyme catalyses 4-aminobutanoate(out) + chloride(out) + 2 Na(+)(out) = 4-aminobutanoate(in) + chloride(in) + 2 Na(+)(in). It catalyses the reaction taurine(out) + chloride(out) + 2 Na(+)(out) = taurine(in) + chloride(in) + 2 Na(+)(in). It carries out the reaction beta-alanine(out) + chloride(out) + 2 Na(+)(out) = beta-alanine(in) + chloride(in) + 2 Na(+)(in). The catalysed reaction is hypotaurine(out) + chloride(out) + 2 Na(+)(out) = hypotaurine(in) + chloride(in) + 2 Na(+)(in). Its function is as follows. Mediates sodium- and chloride-dependent transport of gamma-aminobutyric acid (GABA). Can also mediate transport of beta-alanine, taurine and hypotaurine. This is Sodium- and chloride-dependent GABA transporter 2 (SLC6A13) from Bos taurus (Bovine).